Reading from the N-terminus, the 468-residue chain is Aldehyde dehydrogenase family 3 member B1 (468 aa).

M1 bears the N-acetylmethionine mark. Position 188–193 (188–193 (GNPQVG)) interacts with NAD(+). Residues E210 and C244 contribute to the active site. A lipid anchor (S-palmitoyl cysteine) is attached at C463. At C465 the chain carries Cysteine methyl ester. A lipid anchor (S-geranylgeranyl cysteine) is attached at C465. The propeptide at 466–468 (TLL) is removed in mature form.

This sequence belongs to the aldehyde dehydrogenase family. Post-translationally, dually lipidated in the C-terminus; prenylation occurs prior to, and is a prerequisite for palmitoylation. It is also required for activity towards long-chain substrates.

The protein localises to the cell membrane. The catalysed reaction is an aldehyde + NAD(+) + H2O = a carboxylate + NADH + 2 H(+). It catalyses the reaction a long-chain fatty aldehyde + NAD(+) + H2O = a long-chain fatty acid + NADH + 2 H(+). It carries out the reaction a medium-chain fatty aldehyde + NAD(+) + H2O = a medium-chain fatty acid + NADH + 2 H(+). The enzyme catalyses octanal + NAD(+) + H2O = octanoate + NADH + 2 H(+). The catalysed reaction is nonanal + NAD(+) + H2O = nonanoate + NADH + 2 H(+). It catalyses the reaction hexadecanoate + NADH + 2 H(+) = hexadecanal + NAD(+) + H2O. It carries out the reaction (2E)-octenal + NAD(+) + H2O = (2E)-octenoate + NADH + 2 H(+). The enzyme catalyses (E)-non-2-enal + NAD(+) + H2O = (E)-non-2-enoate + NADH + 2 H(+). The catalysed reaction is (E)-4-hydroxynon-2-enal + NAD(+) + H2O = (E)-4-hydroxynon-2-enoate + NADH + 2 H(+). It catalyses the reaction (2E)-hexadecenal + NAD(+) + H2O = (E)-hexadec-2-enoate + NADH + 2 H(+). It carries out the reaction benzaldehyde + NAD(+) + H2O = benzoate + NADH + 2 H(+). The enzyme catalyses an aldehyde + NADP(+) + H2O = a carboxylate + NADPH + 2 H(+). The catalysed reaction is a medium-chain fatty aldehyde + NADP(+) + H2O = a medium-chain fatty acid + NADPH + 2 H(+). It catalyses the reaction hexanal + NADP(+) + H2O = hexanoate + NADPH + 2 H(+). It carries out the reaction octanal + NADP(+) + H2O = octanoate + NADPH + 2 H(+). The enzyme catalyses nonanal + NADP(+) + H2O = nonanoate + NADPH + 2 H(+). The catalysed reaction is (2E)-octenal + NADP(+) + H2O = (2E)-octenoate + NADPH + 2 H(+). It catalyses the reaction (E)-non-2-enal + NADP(+) + H2O = (E)-non-2-enoate + NADPH + 2 H(+). It carries out the reaction (E)-4-hydroxynon-2-enal + NADP(+) + H2O = (E)-4-hydroxynon-2-enoate + NADPH + 2 H(+). The enzyme catalyses benzaldehyde + NADP(+) + H2O = benzoate + NADPH + 2 H(+). The protein operates within alcohol metabolism; ethanol degradation; acetate from ethanol: step 2/2. Oxidizes medium and long chain saturated and unsaturated fatty aldehydes generated in the plasma membrane into non-toxic fatty acids. May have a protective role against the cytotoxicity induced by lipid peroxidation. Short-chain fatty aldehydes are not good substrates. Can use both NADP(+) and NAD(+) as electron acceptor in vitro, however in vivo preference will depend on their tissue levels. Low activity towards acetaldehyde and 3,4-dihydroxyphenylacetaldehyde. Able to metabolize aromatic aldehydes such as benzaldehyde to their acid form. In Bos taurus (Bovine), this protein is Aldehyde dehydrogenase family 3 member B1 (ALDH3B1).